Consider the following 87-residue polypeptide: Small ribosomal subunit protein bS16 (87 aa).

It belongs to the bacterial ribosomal protein bS16 family.

The sequence is that of Small ribosomal subunit protein bS16 from Variovorax paradoxus (strain S110).